Here is a 75-residue protein sequence, read N- to C-terminus: MQVVVRDNNVDQALRVLKKKMQREGIFREMKARRSYEKPSERRAREKAEAVRRARKLARKQAQREGLLPGKKRAA.

The segment covering 33–52 (RRSYEKPSERRAREKAEAVR) has biased composition (basic and acidic residues). Residues 33-75 (RRSYEKPSERRAREKAEAVRRARKLARKQAQREGLLPGKKRAA) are disordered.

This sequence belongs to the bacterial ribosomal protein bS21 family.

The chain is Small ribosomal subunit protein bS21B from Chelativorans sp. (strain BNC1).